Here is a 569-residue protein sequence, read N- to C-terminus: Pyruvate decarboxylase (569 aa).

2 residues coordinate pyruvate: D38 and H124. Residues T398 and 421–423 (GSI) contribute to the thiamine diphosphate site. Residue D451 participates in Mg(2+) binding. Residues 452–453 (GS) and 478–483 (NQGYTI) each bind thiamine diphosphate. Mg(2+)-binding residues include N478 and G480. E484 is a pyruvate binding site.

Belongs to the TPP enzyme family. As to quaternary structure, homotetramer. Mg(2+) is required as a cofactor. Thiamine diphosphate serves as cofactor.

The enzyme catalyses a 2-oxocarboxylate + H(+) = an aldehyde + CO2. The catalysed reaction is pyruvate + H(+) = acetaldehyde + CO2. The protein is Pyruvate decarboxylase (pdcA) of Aspergillus terreus (strain NIH 2624 / FGSC A1156).